Here is a 341-residue protein sequence, read N- to C-terminus: MQKNTEPVQEAINITPSQQMIASSMGALLTSFFVTPLDVVKIRLQAQSKPFIKGKCFVYCNGLMDHLCLCTNGNGKAWYRAPGHFRGTTDAFVQIIRNEGIKSLWSGLPPTLVMAVPATVIYFTCYDQLRDILIRSMPERAEIASLVAGATARLWSATLISPLELIRTKMQYRPLSYKELRQCIQSSVAKDGWLALWKGWGPTVLRDVPFSALYWHNYELVKQSLCQRYNTLQPTFAISFTAGAVSGSIAAIVTLPFDVVKTRRQVEVGELEMFTYSQKRSSSTWKLMRAIVIENGFGGLFAGLIPRLIKVAPACAIMISTYEFGKSFFRKLNNERQLKSL.

3 Solcar repeats span residues 14–132, 140–224, and 234–328; these read ITPS…LRDI, RAEI…VKQS, and PTFA…GKSF. The next 6 membrane-spanning stretches (helical) occupy residues 20-40, 104-124, 143-163, 200-221, 236-256, and 299-319; these read MIAS…LDVV, LWSG…IYFT, IASL…ISPL, WGPT…YELV, FAIS…VTLP, and GLFA…AIMI.

This sequence belongs to the mitochondrial carrier (TC 2.A.29) family.

The protein resides in the mitochondrion inner membrane. The enzyme catalyses glutathione(in) = glutathione(out). Functionally, probable mitochondrial transporter required for glutathione import into mitochondria. Glutathione, which plays key roles in oxidative metabolism, is produced exclusively in the cytosol and is imported in many organelles. Mitochondrial glutathione is required for the activity and stability of proteins containing iron-sulfur clusters. The polypeptide is Mitochondrial glutathione transporter SLC25A40 (Xenopus tropicalis (Western clawed frog)).